The chain runs to 1028 residues: Exportin-T (1028 aa).

Belongs to the exportin family.

The protein localises to the nucleus. It localises to the cytoplasm. In terms of biological role, tRNA nucleus export receptor which facilitates tRNA translocation across the nuclear pore complex. Involved in pre-tRNA splicing, probably by affecting the interaction of pre-tRNA with splicing endonuclease. This Aspergillus terreus (strain NIH 2624 / FGSC A1156) protein is Exportin-T (los1).